The primary structure comprises 685 residues: Methionine--tRNA ligase (685 aa).

The 'HIGH' region motif lies at 12–22 (PYANGSIHLGH). The Zn(2+) site is built by Cys-143, Cys-146, Cys-156, and Cys-159. The 'KMSKS' region motif lies at 339–343 (KMSKS). ATP is bound at residue Lys-342. The tRNA-binding domain occupies 582 to 685 (DFMKIDMRVA…AGAQPGDKVG (104 aa)).

Belongs to the class-I aminoacyl-tRNA synthetase family. MetG type 1 subfamily. Homodimer. It depends on Zn(2+) as a cofactor.

It is found in the cytoplasm. It carries out the reaction tRNA(Met) + L-methionine + ATP = L-methionyl-tRNA(Met) + AMP + diphosphate. Its function is as follows. Is required not only for elongation of protein synthesis but also for the initiation of all mRNA translation through initiator tRNA(fMet) aminoacylation. In Neisseria meningitidis serogroup A / serotype 4A (strain DSM 15465 / Z2491), this protein is Methionine--tRNA ligase.